We begin with the raw amino-acid sequence, 307 residues long: Putative lipid kinase SE_0507 (307 aa).

The region spanning 3 to 139 (QPYNHGVLFY…YDVLKVNDLY (137 aa)) is the DAGKc domain. ATP contacts are provided by residues Ser-44, 74 to 80 (GDGTLNE), and Thr-101. Mg(2+) contacts are provided by Ser-220, Asp-223, and Arg-225. The active-site Proton acceptor is the Glu-281.

The protein belongs to the diacylglycerol/lipid kinase family. The cofactor is Mg(2+).

In terms of biological role, may catalyze the ATP-dependent phosphorylation of lipids other than diacylglycerol (DAG). The polypeptide is Putative lipid kinase SE_0507 (Staphylococcus epidermidis (strain ATCC 12228 / FDA PCI 1200)).